The following is a 652-amino-acid chain: MQAVEIMEEIREKFKEFEKGGFRKKILITDLTPRDGQQCKLATRVRTDDLLPLCEAMDKVGFYAVEVWGGATYDVCLRYLKEDPWERLRRIKEVMPNTKLQMLFRGQNIVGYRPKSDKLVYKFVERAIKNGITVFRVFDALNDNRNIKTAVKAIKELGGEAHAEISYTRSPIHTYQKWIEYALEIAEMGADWLSFKDATGIIMPFETYAIIKGIKEATGGKLPVLLHNHDMSGTAIVNHMMAVLAGVDMLDTVLSPLAFGSSHPATESVVAMLEGTPFDTGIDMKKLDELAEIVKQIRKKYKKYETEYAGVNAKVLIHKIPGGMISNMVAQLIEANALDKIEEALEEVPNVERDLGHPPLLTPSSQIVGVQAVLNVISGERYKVITKEVRDYVEGKYGKPPGPISKELAEKILGPGKEPDFSIRAADLADPNDWDKAYEETKAILGREPTDEEVLLYALFPMQAKDFFVAREKGELHPEPVDELVETTEVKAGVVPGAAPVEFEIVYHGEKFKVKVEGVSAHQEPGKPRKYYIRVDGRLEEVQITPHVEAIPKGGPTPTAVQAEEKGIPKATQPGDATAPMPGRVVRVLVKEGDKVKEGQTVAIVEAMKMENEIHAPISGVVEKVFVKPGDNVTPDDALLRIKHIEEEVSYG.

Residues 26-288 (ILITDLTPRD…DTGIDMKKLD (263 aa)) form the Pyruvate carboxyltransferase domain. Substrate-binding positions include 34 to 38 (RDGQQ) and Arg-105. Asp-35 lines the a divalent metal cation pocket. 3 residues coordinate a divalent metal cation: Lys-196, His-227, and His-229. At Lys-196 the chain carries N6-carboxylysine. Position 362 (Thr-362) interacts with substrate. Residues 563–643 (AEEKGIPKAT…TPDDALLRIK (81 aa)) enclose the Biotinyl-binding domain. Position 609 is an N6-biotinyllysine (Lys-609).

As to quaternary structure, heterohexadecamer of 8 large subunits and 8 small subunits. Requires Mg(2+) as cofactor. The cofactor is Mn(2+). Co(2+) serves as cofactor. Post-translationally, biotinylated.

The catalysed reaction is hydrogencarbonate + 2-oxoglutarate + ATP = (S)-oxalosuccinate + ADP + phosphate + H(+). This Hydrogenobacter thermophilus (strain DSM 6534 / IAM 12695 / TK-6) protein is 2-oxoglutarate carboxylase large subunit.